Here is a 388-residue protein sequence, read N- to C-terminus: Succinate--CoA ligase [ADP-forming] subunit beta (388 aa).

In terms of domain architecture, ATP-grasp spans 9–244; sequence KQIFAEYQLP…PSQEDPREAL (236 aa). ATP contacts are provided by residues Lys46, 53–55, Glu99, Ser102, and Glu107; that span reads GRG. 2 residues coordinate Mg(2+): Asn199 and Asp213. Substrate-binding positions include Asn264 and 321 to 323; that span reads GIV.

The protein belongs to the succinate/malate CoA ligase beta subunit family. Heterotetramer of two alpha and two beta subunits. It depends on Mg(2+) as a cofactor.

The enzyme catalyses succinate + ATP + CoA = succinyl-CoA + ADP + phosphate. It carries out the reaction GTP + succinate + CoA = succinyl-CoA + GDP + phosphate. The protein operates within carbohydrate metabolism; tricarboxylic acid cycle; succinate from succinyl-CoA (ligase route): step 1/1. In terms of biological role, succinyl-CoA synthetase functions in the citric acid cycle (TCA), coupling the hydrolysis of succinyl-CoA to the synthesis of either ATP or GTP and thus represents the only step of substrate-level phosphorylation in the TCA. The beta subunit provides nucleotide specificity of the enzyme and binds the substrate succinate, while the binding sites for coenzyme A and phosphate are found in the alpha subunit. The sequence is that of Succinate--CoA ligase [ADP-forming] subunit beta from Pasteurella multocida (strain Pm70).